Here is a 232-residue protein sequence, read N- to C-terminus: Esterase YpfH (232 aa).

Active-site charge relay system residues include Ser111, Asp159, and His191.

It belongs to the AB hydrolase superfamily. AB hydrolase 2 family.

Functionally, displays esterase activity toward palmitoyl-CoA and pNP-butyrate. The protein is Esterase YpfH (ypfH) of Escherichia coli (strain K12).